We begin with the raw amino-acid sequence, 223 residues long: Translation initiation factor 6 (223 aa).

Belongs to the eIF-6 family.

Its function is as follows. Binds to the 50S ribosomal subunit and prevents its association with the 30S ribosomal subunit to form the 70S initiation complex. In Saccharolobus islandicus (strain Y.N.15.51 / Yellowstone #2) (Sulfolobus islandicus), this protein is Translation initiation factor 6.